A 2067-amino-acid chain; its full sequence is Non-reducing polyketide synthase PKS12 (2067 aa).

The interval phenylalanine 4–histidine 241 is N-terminal acylcarrier protein transacylase (SAT) domain. A disordered region spans residues asparagine 350–asparagine 373. The span at alanine 356–asparagine 373 shows a compositional bias: polar residues. One can recognise a Ketosynthase family 3 (KS3) domain in the interval asparagine 373 to aspartate 808. Catalysis depends on for beta-ketoacyl synthase activity residues cysteine 545, histidine 680, and histidine 725. The tract at residues phenylalanine 912–serine 1199 is malonyl-CoA:ACP transacylase (MAT) domain. Serine 1001 functions as the For acyl/malonyl transferase activity in the catalytic mechanism. An N-terminal hotdog fold region spans residues glutamine 1297–glutamine 1433. The region spanning glutamine 1297 to asparagine 1606 is the PKS/mFAS DH domain. Histidine 1329 functions as the Proton acceptor; for dehydratase activity in the catalytic mechanism. The tract at residues histidine 1329–valine 1604 is product template (PT) domain. Residues leucine 1460–asparagine 1606 form a C-terminal hotdog fold region. The active-site Proton donor; for dehydratase activity is the aspartate 1519. Positions alanine 1619 to threonine 1648 are disordered. A Carrier domain is found at threonine 1660–aspartate 1738. O-(pantetheine 4'-phosphoryl)serine is present on serine 1698. The tract at residues lysine 1742–serine 1779 is disordered. The segment covering serine 1743–serine 1754 has biased composition (low complexity). The segment at serine 1781–leucine 2065 is claisen cyclase domain. The For Claisen cyclase activity role is filled by serine 1875.

It catalyses the reaction 6 malonyl-CoA + acetyl-CoA + 6 H(+) = naphtopyrone YWA1 + 6 CO2 + 7 CoA + H2O. The protein operates within pigment biosynthesis. Its function is as follows. Non-reducing polyketide synthase; part of the gene cluster that mediates the biosynthesis of aurofusarin, a red mycelium pigment which is acting as a mycotoxin. The first step is performed by the polyketide synthase which condenses one acetyl-CoA and 6 malonyl-CoA units to form the first intermediate, the cyclic heptaketide and yellow pigment YWA1. The C2 hydroxyl group in the pyrone ring of YWA1 is probably formed during ring closure by an aldol-type cyclization reaction. The dehydratase aurZ then acts as the first tailoring enzyme in the aurofusarin biosynthetic pathway by converting YWA1 to nor-rubrofusarin. Nor-rubrofusarin is then methylated to rubrofusarin by the O-methyltransferase aurJ. Rubrofusarin is then transported across the plasma membrane by the rubrofusarin-specific pump aurT for further enzymatic processing by the extracellular complex composed of GIP1, aurF, aurO and aurS to yield aurofusarin. This Gibberella zeae (strain ATCC MYA-4620 / CBS 123657 / FGSC 9075 / NRRL 31084 / PH-1) (Wheat head blight fungus) protein is Non-reducing polyketide synthase PKS12.